We begin with the raw amino-acid sequence, 700 residues long: AP-1-like transcription factor yap1 (700 aa).

Disordered regions lie at residues 17–185 (SPGH…KDLE) and 228–296 (MPVN…VSLR). The short motif at 34-41 (MPVPGRDT) is the Bipartite nuclear localization signal element. The segment covering 47–59 (PSVSNGSQPSAHQ) has biased composition (polar residues). The short motif at 67 to 74 (SPTPEMPP) is the Bipartite nuclear localization signal element. Residues 103 to 112 (LDDDDDDASD) are compositionally biased toward acidic residues. The segment covering 127–138 (AGRAAAASASGS) has biased composition (low complexity). Over residues 150–185 (GDGKRELSKSERRKEQNRAAQKAFRERREAKVKDLE) the composition is skewed to basic and acidic residues. A bZIP domain is found at 156–219 (LSKSERRKEQ…KRLQEENVAL (64 aa)). The segment at 158-182 (KSERRKEQNRAAQKAFRERREAKVK) is basic motif. Positions 184–191 (LEDKVAEL) are leucine-zipper. Transcription activation stretches follow at residues 213 to 400 (QEEN…QPDS) and 452 to 577 (LGAT…GRGN). A compositionally biased stretch (low complexity) spans 231-244 (NSRNSPNSNNGSFS). The span at 280 to 296 (SANTISDNSSESLVSLR) shows a compositional bias: polar residues. The tract at residues 306–318 (FSDHFNTYALGVV) is n-CRD. 2 disordered regions span residues 320 to 359 (VPPP…PSAD) and 542 to 609 (NYLN…KATT). 2 stretches are compositionally biased toward low complexity: residues 335 to 358 (SASN…PPSA) and 542 to 573 (NYLN…NVSS). Residues 589–607 (MGSSRTSVSHDSTDLQGKA) are compositionally biased toward polar residues. Residues 642–675 (PSELWMRFGMQHENSTEHLLIDDLCDQMRAKATC) are c-CRD. The Nuclear export signal motif lies at 660–667 (LLIDDLCD). Cys666 and Cys675 are disulfide-bonded.

Belongs to the bZIP family. YAP subfamily. Post-translationally, depending on the oxidative stress inducing agent, yap1 can undergo two distinct conformational changes, both involving disulfide bond formation, and both masking the nuclear export signal, thus abolishing nuclear export.

The protein resides in the nucleus. It is found in the cytoplasm. In terms of biological role, transcription activator involved in oxidative stress response and redox homeostasis. Regulates the transcription of genes encoding antioxidant enzymes and components of the cellular thiol-reducing pathways. Involved in antifungal resistance to fluconazole. In Cryptococcus neoformans var. grubii serotype A (strain H99 / ATCC 208821 / CBS 10515 / FGSC 9487) (Filobasidiella neoformans var. grubii), this protein is AP-1-like transcription factor yap1.